The following is a 143-amino-acid chain: Antiholin-like protein LrgA (143 aa).

Transmembrane regions (helical) follow at residues 6–26 (VYSFLSQAFIFSAIMLISNII), 30–50 (LPIPMPSSVIGLVILFSLLCL), 61–81 (LGTALTGIIGFLFVPSGISVI), and 97–117 (VIVVATVILLAVTGLFAQFIL).

The protein belongs to the CidA/LrgA family. LrgA subfamily.

It localises to the cell membrane. In terms of biological role, inhibits the expression or activity of extracellular murein hydrolases by interacting, possibly with LrgB, with the holin-like protein CidA. The LrgAB and CidA proteins may affect the proton motive force of the membrane. May be involved in programmed cell death (PCD), possibly triggering PCD in response to antibiotics and environmental stresses. The sequence is that of Antiholin-like protein LrgA from Bacillus cereus (strain AH820).